Consider the following 159-residue polypeptide: Serine-protein kinase RsbW (159 aa).

This sequence belongs to the anti-sigma-factor family.

The catalysed reaction is L-seryl-[protein] + ATP = O-phospho-L-seryl-[protein] + ADP + H(+). It catalyses the reaction L-threonyl-[protein] + ATP = O-phospho-L-threonyl-[protein] + ADP + H(+). Functionally, negative regulator of sigma-B activity. Phosphorylates and inactivates its specific antagonist protein, RsbV. Upon phosphorylation of RsbV, RsbW is released and binds to sigma-B, thereby blocking its ability to form an RNA polymerase holoenzyme (E-sigma-B). This is Serine-protein kinase RsbW from Staphylococcus aureus (strain MSSA476).